A 154-amino-acid polypeptide reads, in one-letter code: Interleukin-2 (154 aa).

The signal sequence occupies residues 1–20 (MYRMQLLSCIALSLALITNS). Thr23 carries O-linked (GalNAc...) threonine glycosylation. An intrachain disulfide couples Cys78 to Cys126.

It belongs to the IL-2 family.

Its subcellular location is the secreted. Cytokine produced by activated CD4-positive helper T-cells and to a lesser extend activated CD8-positive T-cells and natural killer (NK) cells that plays pivotal roles in the immune response and tolerance. Binds to a receptor complex composed of either the high-affinity trimeric IL-2R (IL2RA/CD25, IL2RB/CD122 and IL2RG/CD132) or the low-affinity dimeric IL-2R (IL2RB and IL2RG). Interaction with the receptor leads to oligomerization and conformation changes in the IL-2R subunits resulting in downstream signaling starting with phosphorylation of JAK1 and JAK3. In turn, JAK1 and JAK3 phosphorylate the receptor to form a docking site leading to the phosphorylation of several substrates including STAT5. This process leads to activation of several pathways including STAT, phosphoinositide-3-kinase/PI3K and mitogen-activated protein kinase/MAPK pathways. Functions as a T-cell growth factor and can increase NK-cell cytolytic activity as well. Promotes strong proliferation of activated B-cells and subsequently immunoglobulin production. Plays a pivotal role in regulating the adaptive immune system by controlling the survival and proliferation of regulatory T-cells, which are required for the maintenance of immune tolerance. Moreover, participates in the differentiation and homeostasis of effector T-cell subsets, including Th1, Th2, Th17 as well as memory CD8-positive T-cells. This chain is Interleukin-2 (IL2), found in Saimiri sciureus (Common squirrel monkey).